A 275-amino-acid polypeptide reads, in one-letter code: Large ribosomal subunit protein uL2 (275 aa).

Residues 224-275 are disordered; the sequence is AMNPVDHPHGGGEAKAGQGNPHPVTPWGVPTKGYKTRKNKRTQQFIVRDRRG.

This sequence belongs to the universal ribosomal protein uL2 family. Part of the 50S ribosomal subunit. Forms a bridge to the 30S subunit in the 70S ribosome.

One of the primary rRNA binding proteins. Required for association of the 30S and 50S subunits to form the 70S ribosome, for tRNA binding and peptide bond formation. It has been suggested to have peptidyltransferase activity; this is somewhat controversial. Makes several contacts with the 16S rRNA in the 70S ribosome. This is Large ribosomal subunit protein uL2 from Xanthomonas axonopodis pv. citri (strain 306).